A 39-amino-acid polypeptide reads, in one-letter code: MELFAALNLEPIFQLTFVALIMLAGPFVIFLLAFRGGDL.

The helical transmembrane segment at 12-32 (IFQLTFVALIMLAGPFVIFLL) threads the bilayer.

It belongs to the Psb30/Ycf12 family. In terms of assembly, PSII is composed of 1 copy each of membrane proteins PsbA, PsbB, PsbC, PsbD, PsbE, PsbF, PsbH, PsbI, PsbJ, PsbK, PsbL, PsbM, PsbT, PsbX, PsbY, PsbZ, Psb30/Ycf12, peripheral proteins PsbO, CyanoQ (PsbQ), PsbU, PsbV and a large number of cofactors. It forms dimeric complexes.

The protein localises to the cellular thylakoid membrane. Its function is as follows. A core subunit of photosystem II (PSII), probably helps stabilize the reaction center. In Microcystis aeruginosa (strain NIES-843 / IAM M-2473), this protein is Photosystem II reaction center protein Psb30.